The sequence spans 200 residues: Imidazole glycerol phosphate synthase subunit HisH (200 aa).

In terms of domain architecture, Glutamine amidotransferase type-1 spans aspartate 3 to proline 200. Residue cysteine 78 is the Nucleophile of the active site. Catalysis depends on residues histidine 179 and glutamate 181.

As to quaternary structure, heterodimer of HisH and HisF.

The protein localises to the cytoplasm. The catalysed reaction is 5-[(5-phospho-1-deoxy-D-ribulos-1-ylimino)methylamino]-1-(5-phospho-beta-D-ribosyl)imidazole-4-carboxamide + L-glutamine = D-erythro-1-(imidazol-4-yl)glycerol 3-phosphate + 5-amino-1-(5-phospho-beta-D-ribosyl)imidazole-4-carboxamide + L-glutamate + H(+). It catalyses the reaction L-glutamine + H2O = L-glutamate + NH4(+). It functions in the pathway amino-acid biosynthesis; L-histidine biosynthesis; L-histidine from 5-phospho-alpha-D-ribose 1-diphosphate: step 5/9. In terms of biological role, IGPS catalyzes the conversion of PRFAR and glutamine to IGP, AICAR and glutamate. The HisH subunit catalyzes the hydrolysis of glutamine to glutamate and ammonia as part of the synthesis of IGP and AICAR. The resulting ammonia molecule is channeled to the active site of HisF. This is Imidazole glycerol phosphate synthase subunit HisH from Xanthomonas axonopodis pv. citri (strain 306).